The primary structure comprises 158 residues: MFAVIKTGGKQYRIVANQVVKVEKVIGNAGDVVEFNDVLMVGQEGSAVIGTPVVADARVTAEILEQARGRKVIAFKKRRRQNSKRTRGHRQEFTTLRVLEILMGGSKPKKAAAKPIKEEATAAKGTKDTAVEKKAEKTAEKKTASQKKAAVASKSKKD.

A disordered region spans residues serine 106–aspartate 158. Residues proline 115–threonine 143 show a composition bias toward basic and acidic residues. The span at glutamine 146–aspartate 158 shows a compositional bias: low complexity.

Belongs to the bacterial ribosomal protein bL21 family. As to quaternary structure, part of the 50S ribosomal subunit. Contacts protein L20.

In terms of biological role, this protein binds to 23S rRNA in the presence of protein L20. The polypeptide is Large ribosomal subunit protein bL21 (Bartonella tribocorum (strain CIP 105476 / IBS 506)).